The sequence spans 412 residues: Alpha-1-antitrypsin 1-3 (412 aa).

The N-terminal stretch at 1 to 24 is a signal peptide; sequence MTPSISWGLLLLAGLCCLVPSFLA. N-linked (GlcNAc...) asparagine glycans are attached at residues Asn-64, Asn-101, and Asn-265. An RCL region spans residues 368-387; sequence AVTVLLAVPYSMPPILRFDH.

This sequence belongs to the serpin family.

It is found in the secreted. Functionally, inhibitor of serine proteases. Can inhibit trypsin and chymotrypsin; relatively ineffective against elastase. The sequence is that of Alpha-1-antitrypsin 1-3 (Serpina1c) from Mus musculus (Mouse).